A 640-amino-acid chain; its full sequence is Threonine--tRNA ligase (640 aa).

The region spanning 1–61 (MPVITLPDGS…SNDATLQIIT (61 aa)) is the TGS domain. The catalytic stretch occupies residues 242 to 533 (DHRKIGKQLD…LIEHYAGVFP (292 aa)). Zn(2+)-binding residues include C333, H384, and H510.

Belongs to the class-II aminoacyl-tRNA synthetase family. As to quaternary structure, homodimer. It depends on Zn(2+) as a cofactor.

The protein localises to the cytoplasm. The enzyme catalyses tRNA(Thr) + L-threonine + ATP = L-threonyl-tRNA(Thr) + AMP + diphosphate + H(+). In terms of biological role, catalyzes the attachment of threonine to tRNA(Thr) in a two-step reaction: L-threonine is first activated by ATP to form Thr-AMP and then transferred to the acceptor end of tRNA(Thr). Also edits incorrectly charged L-seryl-tRNA(Thr). This is Threonine--tRNA ligase from Pseudomonas putida (strain ATCC 47054 / DSM 6125 / CFBP 8728 / NCIMB 11950 / KT2440).